The primary structure comprises 296 residues: tRNA dimethylallyltransferase (296 aa).

ATP is bound at residue 9-16; that stretch reads GTTASGKS. 11–16 provides a ligand contact to substrate; that stretch reads TASGKS. An interaction with substrate tRNA region spans residues 34-37; it reads DSLA.

It belongs to the IPP transferase family. Monomer. Mg(2+) serves as cofactor.

The catalysed reaction is adenosine(37) in tRNA + dimethylallyl diphosphate = N(6)-dimethylallyladenosine(37) in tRNA + diphosphate. Its function is as follows. Catalyzes the transfer of a dimethylallyl group onto the adenine at position 37 in tRNAs that read codons beginning with uridine, leading to the formation of N6-(dimethylallyl)adenosine (i(6)A). This is tRNA dimethylallyltransferase from Campylobacter curvus (strain 525.92).